The following is a 485-amino-acid chain: Peroxisomal catalase (485 aa).

Active-site residues include histidine 53 and asparagine 126. Tyrosine 336 is a heme binding site.

The protein belongs to the catalase family. In terms of assembly, homotetramer. Requires heme as cofactor.

Its subcellular location is the peroxisome matrix. The catalysed reaction is 2 H2O2 = O2 + 2 H2O. In terms of biological role, catalyzes the degradation of hydrogen peroxide (H(2)O(2)) generated by peroxisomal oxidases to water and oxygen, thereby protecting cells from the toxic effects of hydrogen peroxide. The sequence is that of Peroxisomal catalase (POX9) from Candida tropicalis (Yeast).